We begin with the raw amino-acid sequence, 691 residues long: DNA ligase (691 aa).

NAD(+) is bound by residues 41–45 (DAEYD), 90–91 (SL), and E130. K132 (N6-AMP-lysine intermediate) is an active-site residue. NAD(+)-binding residues include R153, E190, K307, and K331. 4 residues coordinate Zn(2+): C425, C428, C443, and C449. The BRCT domain maps to 610 to 691 (APQGVLAGKT…MHKLLEGHAR (82 aa)).

Belongs to the NAD-dependent DNA ligase family. LigA subfamily. The cofactor is Mg(2+). Mn(2+) is required as a cofactor.

The catalysed reaction is NAD(+) + (deoxyribonucleotide)n-3'-hydroxyl + 5'-phospho-(deoxyribonucleotide)m = (deoxyribonucleotide)n+m + AMP + beta-nicotinamide D-nucleotide.. DNA ligase that catalyzes the formation of phosphodiester linkages between 5'-phosphoryl and 3'-hydroxyl groups in double-stranded DNA using NAD as a coenzyme and as the energy source for the reaction. It is essential for DNA replication and repair of damaged DNA. This Burkholderia thailandensis (strain ATCC 700388 / DSM 13276 / CCUG 48851 / CIP 106301 / E264) protein is DNA ligase.